We begin with the raw amino-acid sequence, 120 residues long: Large-conductance mechanosensitive channel (120 aa).

Helical transmembrane passes span Glu7–Phe27 and Gly64–Val84.

It belongs to the MscL family. In terms of assembly, homopentamer.

It is found in the cell membrane. In terms of biological role, channel that opens in response to stretch forces in the membrane lipid bilayer. May participate in the regulation of osmotic pressure changes within the cell. This chain is Large-conductance mechanosensitive channel, found in Staphylococcus aureus (strain Mu3 / ATCC 700698).